Here is a 209-residue protein sequence, read N- to C-terminus: Amelotin (209 aa).

An N-terminal signal peptide occupies residues 1-16 (MRSTILLFCLLGSTRS). The disordered stretch occupies residues 142 to 209 (AGANPDVQDG…ATTESANGIQ (68 aa)).

This sequence belongs to the amelotin family. In terms of processing, phosphorylated by FAM20C in vitro. O-glycosylated.

The protein resides in the secreted. Its function is as follows. Is a promoter of calcium phosphate mineralization, playing a critical role in the formation of the compact, mineralized, aprismatic enamel surface layer during the maturation stage of amelogenesis. In Homo sapiens (Human), this protein is Amelotin (AMTN).